The primary structure comprises 347 residues: D-fructose 1,6-bisphosphatase class 2/sedoheptulose 1,7-bisphosphatase (347 aa).

Residues aspartate 33, glutamate 57, aspartate 97, and glutamate 100 each contribute to the Mn(2+) site. Residues 100–102 (EGT), tyrosine 131, 176–178 (RDR), and 198–200 (DGD) contribute to the substrate site. Glutamate 225 provides a ligand contact to Mn(2+).

This sequence belongs to the FBPase class 2 family. Homotetramer. Mn(2+) serves as cofactor.

It carries out the reaction beta-D-fructose 1,6-bisphosphate + H2O = beta-D-fructose 6-phosphate + phosphate. The catalysed reaction is D-sedoheptulose 1,7-bisphosphate + H2O = D-sedoheptulose 7-phosphate + phosphate. It participates in carbohydrate biosynthesis; Calvin cycle. Its function is as follows. Catalyzes the hydrolysis of fructose 1,6-bisphosphate (Fru 1,6-P2) and sedoheptulose 1,7-bisphosphate (Sed 1,7-P2) to fructose 6-phosphate and sedoheptulose 7-phosphate, respectively. This Thermosynechococcus vestitus (strain NIES-2133 / IAM M-273 / BP-1) protein is D-fructose 1,6-bisphosphatase class 2/sedoheptulose 1,7-bisphosphatase.